The sequence spans 252 residues: Imidazole glycerol phosphate synthase subunit HisF (252 aa).

Catalysis depends on residues aspartate 11 and aspartate 130.

The protein belongs to the HisA/HisF family. As to quaternary structure, heterodimer of HisH and HisF.

Its subcellular location is the cytoplasm. The enzyme catalyses 5-[(5-phospho-1-deoxy-D-ribulos-1-ylimino)methylamino]-1-(5-phospho-beta-D-ribosyl)imidazole-4-carboxamide + L-glutamine = D-erythro-1-(imidazol-4-yl)glycerol 3-phosphate + 5-amino-1-(5-phospho-beta-D-ribosyl)imidazole-4-carboxamide + L-glutamate + H(+). It functions in the pathway amino-acid biosynthesis; L-histidine biosynthesis; L-histidine from 5-phospho-alpha-D-ribose 1-diphosphate: step 5/9. Functionally, IGPS catalyzes the conversion of PRFAR and glutamine to IGP, AICAR and glutamate. The HisF subunit catalyzes the cyclization activity that produces IGP and AICAR from PRFAR using the ammonia provided by the HisH subunit. This chain is Imidazole glycerol phosphate synthase subunit HisF, found in Lacticaseibacillus paracasei (strain ATCC 334 / BCRC 17002 / CCUG 31169 / CIP 107868 / KCTC 3260 / NRRL B-441) (Lactobacillus paracasei).